We begin with the raw amino-acid sequence, 432 residues long: MNIIVVGLSHKTAPVDFREKLSIPKVRIGEAIRELCNYPHIEEVAILSTCNRLEIYLLTSDTYQGIREATQFLADSSDLSLPELRQHLFILLHQDAVMHLMRVTAGLDSLIIGEGQILSQVKQCYQLGQQYQGIGPVLNNIFKQAISAGKRVRTETQISTGAVSISSAAVELAQIKKQDLRTANITILGAGKMSRLLVQHLLSKRVKDINIVNRSVERAKLLVDQFKEANINIYNLSELKTILQNSDIVFTGTSSQEPIITPELINDCDNLPSELMLFDIAVPRNVDPNVSQFDNIKVFNVDDLKVVVSQNQQTRRKMAKAAEILLEEELSAFNIWWGSLEAIPTINKLREKAEIIRVKELEKAISRLGNEFVSDHQEIVESLTRGIVNKILHDPMVQLRAQQDIEIRGRALKILQTLFNLDTIKNGMSPTL.

Residues 49-52 (TCNR), Ser-109, 114-116 (EGQ), and Gln-120 each bind substrate. Cys-50 (nucleophile) is an active-site residue. NADP(+) is bound at residue 189–194 (GAGKMS).

The protein belongs to the glutamyl-tRNA reductase family. As to quaternary structure, homodimer.

The protein resides in the plastid. It is found in the cyanelle. The enzyme catalyses (S)-4-amino-5-oxopentanoate + tRNA(Glu) + NADP(+) = L-glutamyl-tRNA(Glu) + NADPH + H(+). Its pathway is porphyrin-containing compound metabolism; protoporphyrin-IX biosynthesis; 5-aminolevulinate from L-glutamyl-tRNA(Glu): step 1/2. It functions in the pathway porphyrin-containing compound metabolism; chlorophyll biosynthesis. Its function is as follows. Catalyzes the NADPH-dependent reduction of glutamyl-tRNA(Glu) to glutamate 1-semialdehyde (GSA). This Cyanophora paradoxa protein is Glutamyl-tRNA reductase.